Here is a 459-residue protein sequence, read N- to C-terminus: D(1)-like dopamine receptor (459 aa).

Over 1–23 the chain is Extracellular; it reads MAQNFSTVGDGKQMLLERDSSKR. The N-linked (GlcNAc...) asparagine glycan is linked to N4. A helical transmembrane segment spans residues 24-49; that stretch reads VLTGCFLSLLIFTTLLGNTLVCVAVT. At 50-60 the chain is on the cytoplasmic side; sequence KFRHLRSKVTN. Residues 61 to 87 form a helical membrane-spanning segment; that stretch reads FFVISLAISDLLVAILVMPWKAATEIM. Topologically, residues 88-96 are extracellular; it reads GFWPFGEFC. An intrachain disulfide couples C96 to C187. The helical transmembrane segment at 97–119 threads the bilayer; the sequence is NIWVAFDIMCSTASILNLCVISV. The Cytoplasmic segment spans residues 120–138; sequence DRYWAISSPFRYERKMTPK. The helical transmembrane segment at 139–164 threads the bilayer; sequence VACLMISVAWTLSVLISFIPVQLNWH. At 165-191 the chain is on the extracellular side; it reads KAQTASYVELNGTYAGDLPPDNCDSSL. A helical transmembrane segment spans residues 192-216; that stretch reads NRTYAISSSLISFYIPVAIMIVTYT. Topologically, residues 217-269 are cytoplasmic; it reads RIYRIAQKQIRRISALERAAESAQNRHSSMGNSLSMESECSFKMSFKRETKVL. Residues 270-297 form a helical membrane-spanning segment; sequence KTLSVIMGVFVCCWLPFFILNCMVPFCE. Residues 298–311 lie on the Extracellular side of the membrane; sequence ADDTTDFPCISSTT. The chain crosses the membrane as a helical span at residues 312–333; that stretch reads FDVFVWFGWANSSLNPIIYAFN. Residues 334-459 lie on the Cytoplasmic side of the membrane; sequence ADFRKAFSIL…QNGQHKSMSC (126 aa).

Belongs to the G-protein coupled receptor 1 family.

Its subcellular location is the cell membrane. The protein localises to the cell projection. It is found in the cilium membrane. Functionally, receptor for dopamine. This chain is D(1)-like dopamine receptor (d14), found in Takifugu rubripes (Japanese pufferfish).